The sequence spans 216 residues: Imidazoleglycerol-phosphate dehydratase (216 aa).

Residue serine 211 is modified to Phosphoserine.

Belongs to the imidazoleglycerol-phosphate dehydratase family.

The catalysed reaction is D-erythro-1-(imidazol-4-yl)glycerol 3-phosphate = 3-(imidazol-4-yl)-2-oxopropyl phosphate + H2O. The protein operates within amino-acid biosynthesis; L-histidine biosynthesis; L-histidine from 5-phospho-alpha-D-ribose 1-diphosphate: step 6/9. This is Imidazoleglycerol-phosphate dehydratase (his5) from Schizosaccharomyces pombe (strain 972 / ATCC 24843) (Fission yeast).